The sequence spans 131 residues: Thrombocorticin (131 aa).

Cys3 and Cys111 are joined by a disulfide. Positions 28–60 (RNESVEVKDSNGNTVSRGSGSSSSGGTFTVINM) are disordered. The segment covering 37-54 (SNGNTVSRGSGSSSSGGT) has biased composition (low complexity). A Pseudodomain-swapping motif motif is present at residues 117–131 (DFNDVFVLITGLVRG).

In terms of biological role, binds to fucose and mannose in a calcium-dependent manner (in vitro). Acts as an agonist for human thrombopoietin receptor MPL (in vitro). Binding of sugar-moieties may promote the interaction with human MPL on the cell surface (in vitro). Catalyzes MPL dimerization and activation, and modulates internalization of the receptor (in vitro). Exhibits proliferation activity in murine recombinant Ba/F3 cells expressing human MPL (Ba/F3-huMPL) (in vitro). Induces phosphorylation of STAT5 in recombinant Ba/F3-huMPL cells, possibly by stimulating MPL on the cell surface to transduce signals via Jak/STAT signaling pathway (in vitro). Does not aggregate rabbit erythrocytes, indicating absent lectin-like agglutination activity (in vitro). This is Thrombocorticin from Corticium sp. (Marine sponge).